The chain runs to 160 residues: SsrA-binding protein (160 aa).

The tract at residues 130 to 160 (LAKGKKKHDKRADQKEQDWQRQKQRLMKHKV) is disordered. A compositionally biased stretch (basic and acidic residues) spans 139–150 (KRADQKEQDWQR). A compositionally biased stretch (basic residues) spans 151–160 (QKQRLMKHKV).

This sequence belongs to the SmpB family.

It localises to the cytoplasm. Required for rescue of stalled ribosomes mediated by trans-translation. Binds to transfer-messenger RNA (tmRNA), required for stable association of tmRNA with ribosomes. tmRNA and SmpB together mimic tRNA shape, replacing the anticodon stem-loop with SmpB. tmRNA is encoded by the ssrA gene; the 2 termini fold to resemble tRNA(Ala) and it encodes a 'tag peptide', a short internal open reading frame. During trans-translation Ala-aminoacylated tmRNA acts like a tRNA, entering the A-site of stalled ribosomes, displacing the stalled mRNA. The ribosome then switches to translate the ORF on the tmRNA; the nascent peptide is terminated with the 'tag peptide' encoded by the tmRNA and targeted for degradation. The ribosome is freed to recommence translation, which seems to be the essential function of trans-translation. This chain is SsrA-binding protein, found in Alkalilimnicola ehrlichii (strain ATCC BAA-1101 / DSM 17681 / MLHE-1).